The chain runs to 340 residues: ATP synthase subunit a (340 aa).

The first 32 residues, 1-32, serve as a signal peptide directing secretion; that stretch reads MKRVNVIQAKAFLKVIALLVPLLLNANGPAFA. Transmembrane regions (helical) follow at residues 107–127, 172–192, 197–217, 236–256, 269–289, and 296–316; these read HVVM…LVGS, LLTV…PYGA, NINV…VAAL, ALWI…PVAL, IVIL…VAVV, and IFIY…FTML.

This sequence belongs to the ATPase A chain family. In terms of assembly, F-type ATPases have 2 components, CF(1) - the catalytic core - and CF(0) - the membrane proton channel. CF(1) has five subunits: alpha(3), beta(3), gamma(1), delta(1), epsilon(1). CF(0) has four main subunits: a, b, b' and c.

It is found in the cell inner membrane. Its function is as follows. Key component of the proton channel; it plays a direct role in the translocation of protons across the membrane. In Pelodictyon phaeoclathratiforme (strain DSM 5477 / BU-1), this protein is ATP synthase subunit a.